A 555-amino-acid polypeptide reads, in one-letter code: Solute carrier family 22 member 2 (555 aa).

Residues 1 to 22 (MPTTVDDVLEHGGEFHFFQKQM) lie on the Cytoplasmic side of the membrane. The helical transmembrane segment at 23-43 (FFLLALLSATFAPIYVGIVFL) threads the bilayer. Residues 44–150 (GFTPDHRCRS…LVCANSWMLD (107 aa)) lie on the Extracellular side of the membrane. An N-linked (GlcNAc...) asparagine glycan is attached at N72. Residues 151-171 (LFQSSVNVGFFIGSMSIGYIA) traverse the membrane as a helical segment. The Cytoplasmic segment spans residues 172–177 (DRFGRK). The chain crosses the membrane as a helical span at residues 178-198 (LCLLTTVLINAAAGVLMAISP). Topologically, residues 199–208 (TYTWMLIFRL) are extracellular. The chain crosses the membrane as a helical span at residues 209–229 (IQGLVSKAGWLIGYILITEFV). The Cytoplasmic portion of the chain corresponds to 230 to 238 (GRRYRRTVG). The helical transmembrane segment at 239-259 (IFYQVAYTVGLLVLAGVAYAL) threads the bilayer. Over 260-263 (PHWR) the chain is Extracellular. A helical transmembrane segment spans residues 264–284 (WLQFTVSLPNFFFLLYYWCIP). A Proline-rich sequence motif is present at residues 284–288 (PESPR). Over 285 to 348 (ESPRWLISQN…VRTPQIRKHT (64 aa)) the chain is Cytoplasmic. Residues 349–369 (MILMYNWFTSSVLYQGLIMHM) form a helical membrane-spanning segment. At 370-375 (GLAGDN) the chain is on the extracellular side. Residues 376–396 (IYLDFFYSALVEFPAAFMIIL) form a helical membrane-spanning segment. The Cytoplasmic portion of the chain corresponds to 397–414 (TIDRIGRRYPWAASNMVA). Residues 415-435 (GAACLASVFIPGDLQWLKIII) traverse the membrane as a helical segment. Topologically, residues 436–441 (SCLGRM) are extracellular. A helical membrane pass occupies residues 442 to 462 (GITMAYEIVCLVNAELYPTFI). Topologically, residues 463-464 (RN) are cytoplasmic. A helical transmembrane segment spans residues 465-485 (LGVHICSSMCDIGGIITPFLV). Residues 486–494 (YRLTNIWLE) are Extracellular-facing. Residues 495–515 (LPLMVFGVLGLVAGGLVLLLP) form a helical membrane-spanning segment. The Cytoplasmic segment spans residues 516–555 (ETKGKALPETIEEAENMQRPRKNKEKMIYLQVQKLDIPLN).

This sequence belongs to the major facilitator (TC 2.A.1) superfamily. Organic cation transporter (TC 2.A.1.19) family. Post-translationally, tyrosine phosphorylated by tyrosine-protein kinase YES1. As to expression, mainly expressed in kidney, in the cortex and medulla. Localized in testis, mostly to peritubular myoid cells and Leydig cells and also detected along the basal membrane of Sertoli cells. Expressed in brain, in neurons of the cerebral cortex and in various subcortical nuclei. In the brain, also detected in the dopaminergic regions of the substantia nigra. Expressed in tracheal and bronchial ciliated epithelium in the respiratory tract. Also detected in secretory phase endometrium, in scattered stromal cells. Expressed in spleen, placenta, small intestine and spinal cord. Weakly expressed in prostate, uterus and lung. In terms of tissue distribution, mainly expressed in kidney, bone marrow and testis. Expressed in colon, skeletal muscle, spinal cord, placenta and liver.

It localises to the basolateral cell membrane. It is found in the basal cell membrane. Its subcellular location is the apical cell membrane. It carries out the reaction (R)-noradrenaline(out) = (R)-noradrenaline(in). The enzyme catalyses (R)-adrenaline(out) = (R)-adrenaline(in). The catalysed reaction is serotonin(out) = serotonin(in). It catalyses the reaction dopamine(out) = dopamine(in). It carries out the reaction histamine(out) = histamine(in). The enzyme catalyses thiamine(in) = thiamine(out). The catalysed reaction is creatinine(in) = creatinine(out). It catalyses the reaction 1-methylnicotinamide(out) = 1-methylnicotinamide(in). It carries out the reaction guanidine(out) = guanidine(in). The enzyme catalyses choline(out) = choline(in). The catalysed reaction is agmatine(out) = agmatine(in). It catalyses the reaction putrescine(out) = putrescine(in). It carries out the reaction spermidine(in) = spermidine(out). The enzyme catalyses tyramine(in) = tyramine(out). The catalysed reaction is L-histidyl-L-proline diketopiperazine(in) = L-histidyl-L-proline diketopiperazine(out). It catalyses the reaction (R)-salsolinol(in) = (R)-salsolinol(out). It carries out the reaction N-methyl-(R)-salsolinol(in) = N-methyl-(R)-salsolinol(out). The enzyme catalyses acetylcholine(in) = acetylcholine(out). The catalysed reaction is prostaglandin F2alpha(out) = prostaglandin F2alpha(in). It catalyses the reaction prostaglandin E2(out) = prostaglandin E2(in). With respect to regulation, tyrosine phosphorylation of the transporter leads to activation of the transport activity. TEA uptake is activated by tyrosine phosphorylation. Inhibited by cGMP, most likely through a cGMP-binding protein that interacts with OCT2. Functionally, electrogenic voltage-dependent transporter that mediates the transport of a variety of organic cations such as endogenous bioactive amines, cationic drugs and xenobiotics. Functions as a Na(+)-independent, bidirectional uniporter. Cation cellular uptake or release is driven by the electrochemical potential, i.e. membrane potential and concentration gradient. However, may also engage electroneutral cation exchange when saturating concentrations of cation substrates are reached. Predominantly expressed at the basolateral membrane of hepatocytes and proximal tubules and involved in the uptake and disposition of cationic compounds by hepatic and renal clearance from the blood flow. Implicated in monoamine neurotransmitters uptake such as histamine, dopamine, adrenaline/epinephrine, noradrenaline/norepinephrine, serotonin and tyramine, thereby supporting a physiological role in the central nervous system by regulating interstitial concentrations of neurotransmitters. Also capable of transporting dopaminergic neuromodulators cyclo(his-pro), salsolinol and N-methyl-salsolinol, thereby involved in the maintenance of dopaminergic cell integrity in the central nervous system. Mediates the bidirectional transport of acetylcholine (ACh) at the apical membrane of ciliated cell in airway epithelium, thereby playing a role in luminal release of ACh from bronchial epithelium. Also transports guanidine and endogenous monoamines such as vitamin B1/thiamine, creatinine and N-1-methylnicotinamide (NMN). Mediates the uptake and efflux of quaternary ammonium compound choline. Mediates the bidirectional transport of polyamine agmatine and the uptake of polyamines putrescine and spermidine. Able to transport non-amine endogenous compounds such as prostaglandin E2 (PGE2) and prostaglandin F2-alpha (PGF2-alpha). Also involved in the uptake of xenobiotic 4-(4-(dimethylamino)styryl)-N-methylpyridinium (ASP). May contribute to regulate the transport of organic compounds in testis across the blood-testis-barrier. Its function is as follows. In contrast with isoform 1, not able to transport guanidine, creatinine, cimetidine and metformin. This Homo sapiens (Human) protein is Solute carrier family 22 member 2.